The chain runs to 114 residues: T cell receptor beta variable 6-2 (114 aa).

Residues 1 to 21 (MSLGLLCCGAFSLLWAGPVNA) form the signal peptide. One can recognise an Ig-like domain in the interval 22–114 (GVTQTPKFRV…TSVYFCASSY (93 aa)). Cys-42 and Cys-110 are oxidised to a cystine. The N-linked (GlcNAc...) asparagine glycan is linked to Asn-84.

In terms of assembly, alpha-beta TR is a heterodimer composed of an alpha and beta chain; disulfide-linked. The alpha-beta TR is associated with the transmembrane signaling CD3 coreceptor proteins to form the TR-CD3 (TcR or TCR). The assembly of alpha-beta TR heterodimers with CD3 occurs in the endoplasmic reticulum where a single alpha-beta TR heterodimer associates with one CD3D-CD3E heterodimer, one CD3G-CD3E heterodimer and one CD247 homodimer forming a stable octameric structure. CD3D-CD3E and CD3G-CD3E heterodimers preferentially associate with TR alpha and TR beta chains, respectively. The association of the CD247 homodimer is the last step of TcR assembly in the endoplasmic reticulum and is required for transport to the cell surface.

It localises to the cell membrane. In terms of biological role, v region of the variable domain of T cell receptor (TR) beta chain that participates in the antigen recognition. Alpha-beta T cell receptors are antigen specific receptors which are essential to the immune response and are present on the cell surface of T lymphocytes. Recognize peptide-major histocompatibility (MH) (pMH) complexes that are displayed by antigen presenting cells (APC), a prerequisite for efficient T cell adaptive immunity against pathogens. Binding of alpha-beta TR to pMH complex initiates TR-CD3 clustering on the cell surface and intracellular activation of LCK that phosphorylates the ITAM motifs of CD3G, CD3D, CD3E and CD247 enabling the recruitment of ZAP70. In turn ZAP70 phosphorylates LAT, which recruits numerous signaling molecules to form the LAT signalosome. The LAT signalosome propagates signal branching to three major signaling pathways, the calcium, the mitogen-activated protein kinase (MAPK) kinase and the nuclear factor NF-kappa-B (NF-kB) pathways, leading to the mobilization of transcription factors that are critical for gene expression and essential for T cell growth and differentiation. The T cell repertoire is generated in the thymus, by V-(D)-J rearrangement. This repertoire is then shaped by intrathymic selection events to generate a peripheral T cell pool of self-MH restricted, non-autoaggressive T cells. Post-thymic interaction of alpha-beta TR with the pMH complexes shapes TR structural and functional avidity. In Homo sapiens (Human), this protein is T cell receptor beta variable 6-2.